The chain runs to 527 residues: Tubulin-specific chaperone E (527 aa).

Ser-2 bears the N-acetylserine mark. One can recognise a CAP-Gly domain in the interval 27–71 (GVVPPVAGPWLGVEWDNPERGKHDGSHEGTVYFKCRHPTGGSFIR). LRR repeat units lie at residues 154 to 175 (NIRKVDLSKNLLSSWDEVIHIA), 180 to 200 (HLEVLNVSENKLKFPSGSVLT), 205 to 226 (VLKVLVLNQTGITWAEVLRCVA), 230 to 252 (GLEELYLESNNIFISERPTDVLQ), 253 to 274 (TVKLLDLSSNQLIDENQLYLIA), 278 to 299 (RLEQLILSDTGISSLHFPDAGI), and 308 to 329 (SLKYLVVNDNQISQWSFFNELE). The region spanning 342–384 (NPLTKEDKEAETARLLIIASIGQLKTLNKCEILPEERRRAELD) is the LRRCT domain. Residue Lys-463 is modified to N6-acetyllysine. Ser-495 carries the post-translational modification Phosphoserine.

Belongs to the TBCE family. As to quaternary structure, supercomplex made of cofactors A to E. Cofactors A and D function by capturing and stabilizing tubulin in a quasi-native conformation. Cofactor E binds to the cofactor D-tubulin complex; interaction with cofactor C then causes the release of tubulin polypeptides that are committed to the native state. Cofactors B and E can form a heterodimer which binds to alpha-tubulin and enhances their ability to dissociate tubulin heterodimers. Interacts with TBCD.

It is found in the cytoplasm. Its subcellular location is the cytoskeleton. Its function is as follows. Tubulin-folding protein; involved in the second step of the tubulin folding pathway and in the regulation of tubulin heterodimer dissociation. Required for correct organization of microtubule cytoskeleton and mitotic splindle, and maintenance of the neuronal microtubule network. This is Tubulin-specific chaperone E (TBCE) from Homo sapiens (Human).